An 876-amino-acid polypeptide reads, in one-letter code: Monofunctional isopimaradiene synthase, chloroplastic (876 aa).

The N-terminal 64 residues, Met-1–Ile-64, are a transit peptide targeting the chloroplast. Mg(2+) contacts are provided by Asp-628, Asp-632, Asn-772, Thr-776, and Glu-780. The DDXXD motif motif lies at Asp-628–Asp-632.

The protein belongs to the terpene synthase family. Tpsd subfamily. Requires Mg(2+) as cofactor.

The protein localises to the plastid. The protein resides in the chloroplast. The catalysed reaction is (+)-copalyl diphosphate = isopimara-7,15-diene + diphosphate. Its pathway is terpene metabolism; oleoresin biosynthesis. Involved in defensive oleoresin formation in conifers in response to insect attack or other injury. Involved in diterpene (C20) olefins biosynthesis. Monofunctional enzyme lacking the DXDD motif in the class II active site relevant for the cyclization of geranylgeranyl diphosphate (GGPP). Requires (+)-copalyl diphosphate ((+)-CPP) as substrate, but no activity with GGPP or ent-CPP. Isopimaradiene is the major products of the enzyme followed by sandaracopimaradiene. The sequence is that of Monofunctional isopimaradiene synthase, chloroplastic from Pinus banksiana (Jack pine).